Here is a 450-residue protein sequence, read N- to C-terminus: Chromosomal replication initiator protein DnaA (450 aa).

The interval 1-73 (MNTKELWIEV…KNILKKLTGI (73 aa)) is domain I, interacts with DnaA modulators. The segment at 73–104 (IQYNISFELEKNINKQASVISKIDTLTENNNL) is domain II. The domain III, AAA+ region stretch occupies residues 105 to 326 (AYYENYTFEN…GAIKRLLFLA (222 aa)). The ATP site is built by glycine 149, glycine 151, lysine 152, and threonine 153. The tract at residues 327–450 (VMNKKPNEII…NAIRRKIEGR (124 aa)) is domain IV, binds dsDNA.

The protein belongs to the DnaA family. As to quaternary structure, oligomerizes as a right-handed, spiral filament on DNA at oriC.

It localises to the cytoplasm. Its function is as follows. Plays an essential role in the initiation and regulation of chromosomal replication. ATP-DnaA binds to the origin of replication (oriC) to initiate formation of the DNA replication initiation complex once per cell cycle. Binds the DnaA box (a 9 base pair repeat at the origin) and separates the double-stranded (ds)DNA. Forms a right-handed helical filament on oriC DNA; dsDNA binds to the exterior of the filament while single-stranded (ss)DNA is stabiized in the filament's interior. The ATP-DnaA-oriC complex binds and stabilizes one strand of the AT-rich DNA unwinding element (DUE), permitting loading of DNA polymerase. After initiation quickly degrades to an ADP-DnaA complex that is not apt for DNA replication. Binds acidic phospholipids. In Spiroplasma citri, this protein is Chromosomal replication initiator protein DnaA.